The following is a 1154-amino-acid chain: PDZ domain-containing protein 8 (1154 aa).

Residues 2–24 form a helical membrane-spanning segment; sequence GLLLMILASAVLGSFLTLLAQFF. The interval 66-90 is disordered; it reads DEEPSGAAPEGGATPTAAPETPAPP. Residues 70–85 show a composition bias toward low complexity; the sequence is SGAAPEGGATPTAAPE. The 204-residue stretch at 91 to 294 folds into the SMP-LTD domain; it reads TRETCYFLNA…LPNYKIRFKP (204 aa). The 84-residue stretch at 366 to 449 folds into the PDZ domain; that stretch reads TVELIKGNLQ…RVLVYYERPV (84 aa). Serine 496, serine 521, and serine 538 each carry phosphoserine. Residues 548-612 form a disordered region; the sequence is GSHPLPPKIQ…SADAPNQAEP (65 aa). The Phorbol-ester/DAG-type zinc-finger motif lies at 840–891; that stretch reads KHSFQDTQFQNPTWCDYCKKKVWTKAASQCMFCAYVCHKKCQEKCLAETSVC. The disordered stretch occupies residues 955–999; it reads RLSEPGTDLVEPSPKHTPNTSDNEGSDTEVCGPNSPSKRGNSTGI. A phosphoserine mark is found at serine 967 and serine 980. Positions 988–998 are enriched in polar residues; sequence NSPSKRGNSTG. A coiled-coil region spans residues 1028–1063; the sequence is PTEERIQKLEFMLDKLQNEIDQELEHNNSLVREEKE. Over residues 1132–1144 the composition is skewed to polar residues; it reads SQLIDSQPFSSIS. A disordered region spans residues 1132–1154; sequence SQLIDSQPFSSISDDLFGPSESV.

In terms of assembly, interacts with MSN. (Microbial infection) Interacts with HIV-1 Gag polyprotein p55.

The protein localises to the endoplasmic reticulum membrane. In terms of biological role, molecular tethering protein that connects endoplasmic reticulum and mitochondria membranes. PDZD8-dependent endoplasmic reticulum-mitochondria membrane tethering is essential for endoplasmic reticulum-mitochondria Ca(2+) transfer. In neurons, involved in the regulation of dendritic Ca(2+) dynamics by regulating mitochondrial Ca(2+) uptake in neurons. Plays an indirect role in the regulation of cell morphology and cytoskeletal organization. May inhibit herpes simplex virus 1 infection at an early stage. This is PDZ domain-containing protein 8 from Homo sapiens (Human).